The following is a 290-amino-acid chain: 2-dehydropantoate 2-reductase (290 aa).

NADP(+)-binding positions include 8–13 (GPGAVG), Asn98, and Ala124. Position 98 (Asn98) interacts with substrate. Residue Lys175 is the Proton donor of the active site. Substrate is bound by residues Asn179 and Ser244. Glu256 lines the NADP(+) pocket.

Belongs to the ketopantoate reductase family.

It is found in the cytoplasm. The catalysed reaction is (R)-pantoate + NADP(+) = 2-dehydropantoate + NADPH + H(+). The protein operates within cofactor biosynthesis; (R)-pantothenate biosynthesis; (R)-pantoate from 3-methyl-2-oxobutanoate: step 2/2. Its function is as follows. Catalyzes the NADPH-dependent reduction of ketopantoate into pantoic acid. The protein is 2-dehydropantoate 2-reductase of Caulobacter vibrioides (strain ATCC 19089 / CIP 103742 / CB 15) (Caulobacter crescentus).